A 323-amino-acid polypeptide reads, in one-letter code: MSDGAAARRWGKCGPPCSRESIMVAFKGVWTQAFWKAVTAEFLAMLIFVLLSVGSTINWGGSENPLPVDMVLISLCFGLSIATMVQCFGHISGGHINPAVTVAMVCTRKISIAKSVFYITAQCLGAIIGAGILYLVTPPSVVGGLGVTTVHGNLTAGHGLLVELIITFQLVFTIFASCDSKRTDVTGSVALAIGFSVAIGHLFAINYTGASMNPARSFGPAVIMGNWENHWIYWVGPIIGAVLAGALYEYVFCPDVELKRRLKEAFSKAAQQTKGSYMEVEDNRSQVETEDLILKPGVVHVIDIDRGDEKKGKDSSGEVLSSV.

Residues 1–36 (MSDGAAARRWGKCGPPCSRESIMVAFKGVWTQAFWK) lie on the Cytoplasmic side of the membrane. Residues C13 and C17 are each lipidated (S-palmitoyl cysteine). The chain crosses the membrane as a helical span at residues 37 to 57 (AVTAEFLAMLIFVLLSVGSTI). Over 58–69 (NWGGSENPLPVD) the chain is Extracellular. Residues 70 to 89 (MVLISLCFGLSIATMVQCFG) form a helical membrane-spanning segment. At 90-93 (HISG) the chain is on the cytoplasmic side. An intramembrane region (discontinuously helical) is located at residues 94–101 (GHINPAVT). Positions 97-99 (NPA) match the NPA 1 motif. The Cytoplasmic portion of the chain corresponds to 102-115 (VAMVCTRKISIAKS). A Phosphoserine; by PKG modification is found at S111. The helical transmembrane segment at 116–136 (VFYITAQCLGAIIGAGILYLV) threads the bilayer. The Extracellular portion of the chain corresponds to 137–155 (TPPSVVGGLGVTTVHGNLT). N153 is a glycosylation site (N-linked (GlcNAc...) asparagine). A helical membrane pass occupies residues 156–176 (AGHGLLVELIITFQLVFTIFA). Topologically, residues 177–184 (SCDSKRTD) are cytoplasmic. S180 bears the Phosphoserine; by PKC mark. Residues 185-205 (VTGSVALAIGFSVAIGHLFAI) traverse the membrane as a helical segment. Over 206 to 208 (NYT) the chain is Extracellular. Positions 209–222 (GASMNPARSFGPAV) form an intramembrane region, discontinuously helical. The short motif at 213–215 (NPA) is the NPA 2 element. Residues 223–231 (IMGNWENHW) lie on the Extracellular side of the membrane. A helical membrane pass occupies residues 232–252 (IYWVGPIIGAVLAGALYEYVF). The Cytoplasmic portion of the chain corresponds to 253 to 323 (CPDVELKRRL…DSSGEVLSSV (71 aa)). Residues S276 and S285 each carry the phosphoserine modification. T289 carries the phosphothreonine modification. A Phosphoserine modification is found at S321.

This sequence belongs to the MIP/aquaporin (TC 1.A.8) family. In terms of assembly, homotetramer. The tetramers can form oligomeric arrays in membranes. The size of the oligomers differs between tissues and is smaller in skeletal muscle than in brain. Interaction between AQP4 oligomeric arrays in close-by cells can contribute to cell-cell adhesion. Part of a complex containing MLC1, TRPV4, HEPACAM and ATP1B1. In terms of processing, phosphorylation by PKC at Ser-180 promotes internalization from the cell membrane, reducing the conductance by 50%. Phosphorylation by PKG at Ser-111 in response to glutamate increases conductance by 40%. Post-translationally, isoform Long: Palmitoylated on its N-terminal region. Isoform 3: Not palmitoylated. As to expression, detected in cerebellum. Detected on pericapillary astrocyte endfeet in cerebellum, and in skeletal muscle. Detected in glial lamellae in the hypothalamus (at protein level). Abundant in mature brain cortex, cerebellum and spinal cord. Highly expressed in the ependymal cell lining the aqueductal system and over the space of the brain in contact with the subarachnoid space. Detected in paraventricular and supraoptic nuclei, the granule cell layer of the dentate gyrus and the Purkinje cell layer in the cerebellum. Only weakly detectable in eye, kidney, intestine, and lung.

The protein localises to the cell membrane. It localises to the basolateral cell membrane. Its subcellular location is the endosome membrane. It is found in the sarcolemma. The protein resides in the cell projection. It catalyses the reaction H2O(in) = H2O(out). Functionally, forms a water-specific channel. Plays an important role in brain water homeostasis and in glymphatic solute transport. Required for a normal rate of water exchange across the blood brain interface. Required for normal levels of cerebrospinal fluid influx into the brain cortex and parenchyma along paravascular spaces that surround penetrating arteries, and for normal drainage of interstitial fluid along paravenous drainage pathways. Thereby, it is required for normal clearance of solutes from the brain interstitial fluid, including soluble beta-amyloid peptides derived from APP. Plays a redundant role in urinary water homeostasis and urinary concentrating ability. In Rattus norvegicus (Rat), this protein is Aquaporin-4 (Aqp4).